The sequence spans 284 residues: MTHAIEVRGLSKSFRADRKALDDVTLHIAPGEMVALLGASGSGKSTLLRHVAGFITGDAGAGEILVNGRHVQRNGRLARNVRKVRGEIGFVFQQFNLVGRLPVITNVLVGTLARVPKWRSLLRIFKADEVQGGLDALAQVGIDDYAFQRASTLSGGQQQRAAIARTLVQNASVILADEPIASLDPESSRRVMSLLRQINRTRKVAVLVSLHQVDVAMRYCPRVVALRHGKVVYDGPSAALTPGMLRDLYGTEADELLLDSVPDEDVSTAAMPAPAMVTMNLAAA.

An ABC transporter domain is found at 5 to 253 (IEVRGLSKSF…MLRDLYGTEA (249 aa)). 38–45 (GASGSGKS) is a binding site for ATP.

The protein belongs to the ABC transporter superfamily. Phosphonates importer (TC 3.A.1.9.1) family. The complex is composed of two ATP-binding proteins (PhnC), two transmembrane proteins (PhnE) and a solute-binding protein (PhnD).

It localises to the cell inner membrane. The catalysed reaction is phosphonate(out) + ATP + H2O = phosphonate(in) + ADP + phosphate + H(+). In terms of biological role, part of the ABC transporter complex PhnCDE involved in phosphonates import. Responsible for energy coupling to the transport system. In Cupriavidus necator (strain ATCC 17699 / DSM 428 / KCTC 22496 / NCIMB 10442 / H16 / Stanier 337) (Ralstonia eutropha), this protein is Phosphonates import ATP-binding protein PhnC 2.